The chain runs to 293 residues: Extracellular metalloprotease PODANS_2_14170 (293 aa).

The signal sequence occupies residues 1 to 18 (MRFSLALAAAGLAQTAFA). Asparagine 60 carries N-linked (GlcNAc...) asparagine glycosylation. Histidine 206 contacts Zn(2+). Glutamate 207 is an active-site residue. Histidine 210 contacts Zn(2+). Residues cysteine 242 and cysteine 269 are joined by a disulfide bond.

It belongs to the peptidase M43B family.

The protein resides in the secreted. In terms of biological role, secreted metalloproteinase that allows assimilation of proteinaceous substrates. The polypeptide is Extracellular metalloprotease PODANS_2_14170 (Podospora anserina (strain S / ATCC MYA-4624 / DSM 980 / FGSC 10383) (Pleurage anserina)).